Reading from the N-terminus, the 119-residue chain is MARVKGGVVSRKRRKRILKLAKGYYGAKHLLFRTAKEQVMNSYYYAYRDRRQKKRDFRKLWITRINAAARMNGLSYSQLMHGLKLAEIEVNRKMLADLAVNDAAAFTALADAAKAKLAK.

This sequence belongs to the bacterial ribosomal protein bL20 family.

In terms of biological role, binds directly to 23S ribosomal RNA and is necessary for the in vitro assembly process of the 50S ribosomal subunit. It is not involved in the protein synthesizing functions of that subunit. The protein is Large ribosomal subunit protein bL20 of Streptococcus suis (strain 98HAH33).